Consider the following 624-residue polypeptide: NADPH-dependent diflavin oxidoreductase 1 (624 aa).

The 163-residue stretch at 6–168 (IVILYGSETG…VYYEFEKRII (163 aa)) folds into the Flavodoxin-like domain. Residues 12 to 17 (SETGNA), 59 to 62 (STTG), 106 to 115 (LGDSSYPRFN), and glutamate 142 contribute to the FMN site. Positions 226 to 474 (ETIRHGTVKK…LQNNHLLHED (249 aa)) constitute an FAD-binding FR-type domain. Residues arginine 384, 414-417 (RFYS), and 446-449 (GLCT) each bind FAD. NADP(+) is bound by residues 539-540 (SR) and 548-552 (AKYVQ). Tryptophan 624 provides a ligand contact to FAD.

It belongs to the NADPH-dependent diflavin oxidoreductase NDOR1 family. The protein in the N-terminal section; belongs to the flavodoxin family. In the C-terminal section; belongs to the flavoprotein pyridine nucleotide cytochrome reductase family. Interacts with DRE2; as part of the cytosolic iron-sulfur (Fe-S) protein assembly (CIA) machinery. The cofactor is FAD. FMN serves as cofactor.

The protein resides in the cytoplasm. The protein localises to the mitochondrion. The catalysed reaction is 2 oxidized [2Fe-2S]-[protein] + NADPH = 2 reduced [2Fe-2S]-[protein] + NADP(+) + H(+). NADPH-dependent reductase which is a central component of the cytosolic iron-sulfur (Fe-S) protein assembly (CIA) machinery. Transfers electrons from NADPH via its FAD and FMN prosthetic groups to the [2Fe-2S] cluster of DRE2, another key component of the CIA machinery. In turn, this reduced cluster provides electrons for assembly of cytosolic iron-sulfur cluster proteins. Positively controls H(2)O(2)-induced cell death. The protein is NADPH-dependent diflavin oxidoreductase 1 of Kluyveromyces lactis (strain ATCC 8585 / CBS 2359 / DSM 70799 / NBRC 1267 / NRRL Y-1140 / WM37) (Yeast).